The primary structure comprises 256 residues: Ubiquinone/menaquinone biosynthesis C-methyltransferase UbiE (256 aa).

Residues Met-1–Gly-19 are compositionally biased toward polar residues. The tract at residues Met-1–Pro-24 is disordered. Residues Thr-81, Asp-102, and Asp-128 to Ala-129 each bind S-adenosyl-L-methionine.

The protein belongs to the class I-like SAM-binding methyltransferase superfamily. MenG/UbiE family.

It carries out the reaction a 2-demethylmenaquinol + S-adenosyl-L-methionine = a menaquinol + S-adenosyl-L-homocysteine + H(+). It catalyses the reaction a 2-methoxy-6-(all-trans-polyprenyl)benzene-1,4-diol + S-adenosyl-L-methionine = a 5-methoxy-2-methyl-3-(all-trans-polyprenyl)benzene-1,4-diol + S-adenosyl-L-homocysteine + H(+). Its pathway is quinol/quinone metabolism; menaquinone biosynthesis; menaquinol from 1,4-dihydroxy-2-naphthoate: step 2/2. It participates in cofactor biosynthesis; ubiquinone biosynthesis. Functionally, methyltransferase required for the conversion of demethylmenaquinol (DMKH2) to menaquinol (MKH2) and the conversion of 2-polyprenyl-6-methoxy-1,4-benzoquinol (DDMQH2) to 2-polyprenyl-3-methyl-6-methoxy-1,4-benzoquinol (DMQH2). The chain is Ubiquinone/menaquinone biosynthesis C-methyltransferase UbiE from Bordetella avium (strain 197N).